Here is a 446-residue protein sequence, read N- to C-terminus: MDASGVIDELKHRKEAFVTGHSGSSIADLRDVTLAGIFSNAAWIYVVSNNPSYRDSFWLDFLLNWMGLLCSVTVFGENPFLTGILGLSAVLLFGCISKGSKRETIKETVMDNGNQSATLTVYRSTMLILTSIAILAVDFPIFPRKYAKVETWGISLMDLGVGSFVFSNGIISYKRLKSGTELSKWAKIKQSLRSTVVLVVLGFIRLFSVKAVNYQEHATEYGIHWNFFFTLSLLPLAMIIFDFYNMRLRFVIGLIAAIIYELCLIYHPTFLDYLLNAERIDFISANREGIFSFVGYCIIYLAGQQVGSMFFPISRNPMQLLWKLVALSIFSSAISYVLLHYHPLQVSRRFASIGYSSMVISFNLLILTFDQLIVECLTSKPRVPKTYRAVNGNGMLVFLISNVTTGMVNFTFNTLDSPPYKAMAILTVYALFLAVFALKVPFKLKF.

3 consecutive transmembrane segments (helical) span residues 32-52 (VTLA…NNPS), 56-75 (SFWL…VTVF), and 76-94 (GENP…LLFG). Asn-114 carries N-linked (GlcNAc...) asparagine glycosylation. 10 helical membrane-spanning segments follow: residues 122–142 (YRST…FPIF), 151–171 (TWGI…NGII), 194–214 (STVV…AVNY), 221–241 (YGIH…MIIF), 250–270 (FVIG…HPTF), 293–313 (FVGY…FFPI), 320–340 (LLWK…VLLH), 350–370 (FASI…LTFD), 395–415 (MLVF…FNTL), and 422–442 (AMAI…KVPF).

It belongs to the PIGW family.

The protein localises to the endoplasmic reticulum membrane. The protein operates within glycolipid biosynthesis; glycosylphosphatidylinositol-anchor biosynthesis. Probable acetyltransferase, which acetylates the inositol ring of phosphatidylinositol during biosynthesis of GPI-anchor. This chain is GPI-anchored wall transfer protein 1 (GWT1), found in Kluyveromyces lactis (strain ATCC 8585 / CBS 2359 / DSM 70799 / NBRC 1267 / NRRL Y-1140 / WM37) (Yeast).